The following is a 966-amino-acid chain: Phosphoenolpyruvate carboxylase (966 aa).

Position 10 is a phosphoserine (Ser-10). Residues His-171 and Lys-601 contribute to the active site.

The protein belongs to the PEPCase type 1 family. In terms of assembly, homotetramer. The cofactor is Mg(2+).

The protein resides in the cytoplasm. The enzyme catalyses oxaloacetate + phosphate = phosphoenolpyruvate + hydrogencarbonate. By light-reversible phosphorylation. Through the carboxylation of phosphoenolpyruvate (PEP) it forms oxaloacetate, a four-carbon dicarboxylic acid source for the tricarboxylic acid cycle. The protein is Phosphoenolpyruvate carboxylase (PEPC) of Medicago sativa (Alfalfa).